The following is a 775-amino-acid chain: Melanoma-associated antigen D1 (775 aa).

The interval 37-330 is disordered; sequence SEAPPTSQAT…PARQTPSAWQ (294 aa). The span at 39 to 50 shows a compositional bias: low complexity; that stretch reads APPTSQATAAAS. Polar residues-rich tracts occupy residues 52–63, 84–100, 150–180, 223–237, 250–260, and 297–330; these read PNASPQSSQPPT, KAQNTTTKGPNDYSQAR, GQNTTTKAGPSATYNFTQSPSANEMTNNQPK, AQTSADGSQAQNVES, NNLNVEENSNG, and LAWQNPSGWQNQTARQTPPARQSPPARQTPSAWQ. 19 tandem repeats follow at residues 293 to 298, 299 to 304, 305 to 310, 329 to 334, 335 to 340, 341 to 346, 347 to 352, 353 to 358, 359 to 364, 365 to 370, 371 to 376, 377 to 382, 383 to 388, 389 to 394, 395 to 400, 401 to 406, 407 to 412, 413 to 418, and 419 to 424. Residues 293-441 are 22 X 6 AA tandem repeats of W-[PQ]-X-P-X-X; that stretch reads WQTPLAWQNP…IPPDWQNLRP (149 aa). Residues 374–407 form a disordered region; sequence TPGWQSPPSWQAPPSWQSPQDWQGPPDWQLPPDW. Over residues 375 to 406 the composition is skewed to low complexity; sequence PGWQSPPSWQAPPSWQSPQDWQGPPDWQLPPD. A 20; approximate repeat occupies 425 to 429; it reads WIPAD. 2 consecutive repeat copies span residues 430 to 435 and 436 to 441. A compositionally biased stretch (low complexity) spans 437 to 452; that stretch reads QNLRPSPNLRSSPNSR. A disordered region spans residues 437-463; the sequence is QNLRPSPNLRSSPNSRASQNQGPPQPR. The MAGE domain occupies 468–666; it reads LQERANKLVK…RDWTAQFMEA (199 aa).

In terms of assembly, interacts with DLX5, DLX7 and MSX2 and forms homomultimers. Interacts with UNC5A. Interacts with TRIM28 and PJA1. Interacts with NGFR/p75NTR and RORA. In terms of tissue distribution, ubiquitous and in the seminiferous tubules expressed in Sertoli cells but not in germ cells. Expression decreases in all tissues with increased age and is detectable only in brain cortex and lung.

It localises to the cytoplasm. The protein localises to the cell membrane. It is found in the nucleus. Involved in the apoptotic response after nerve growth factor (NGF) binding in neuronal cells. Inhibits cell cycle progression, and facilitates NGFR-mediated apoptosis. May act as a regulator of the function of DLX family members. May enhance ubiquitin ligase activity of RING-type zinc finger-containing E3 ubiquitin-protein ligases. Proposed to act through recruitment and/or stabilization of the Ubl-conjugating enzyme (E2) at the E3:substrate complex. Plays a role in the circadian rhythm regulation. May act as RORA co-regulator, modulating the expression of core clock genes such as BMAL1 and NFIL3, induced, or NR1D1, repressed. The chain is Melanoma-associated antigen D1 (Maged1) from Rattus norvegicus (Rat).